The following is a 396-amino-acid chain: Lipid-A-disaccharide synthase (396 aa).

The protein belongs to the LpxB family.

The catalysed reaction is a lipid X + a UDP-2-N,3-O-bis[(3R)-3-hydroxyacyl]-alpha-D-glucosamine = a lipid A disaccharide + UDP + H(+). It functions in the pathway bacterial outer membrane biogenesis; LPS lipid A biosynthesis. Condensation of UDP-2,3-diacylglucosamine and 2,3-diacylglucosamine-1-phosphate to form lipid A disaccharide, a precursor of lipid A, a phosphorylated glycolipid that anchors the lipopolysaccharide to the outer membrane of the cell. This Nitrobacter hamburgensis (strain DSM 10229 / NCIMB 13809 / X14) protein is Lipid-A-disaccharide synthase.